Consider the following 182-residue polypeptide: ATP synthase subunit delta (182 aa).

Belongs to the ATPase delta chain family. In terms of assembly, F-type ATPases have 2 components, F(1) - the catalytic core - and F(0) - the membrane proton channel. F(1) has five subunits: alpha(3), beta(3), gamma(1), delta(1), epsilon(1). CF(0) has four main subunits: a(1), b(1), b'(1) and c(10-14). The alpha and beta chains form an alternating ring which encloses part of the gamma chain. F(1) is attached to F(0) by a central stalk formed by the gamma and epsilon chains, while a peripheral stalk is formed by the delta, b and b' chains.

It localises to the cellular thylakoid membrane. F(1)F(0) ATP synthase produces ATP from ADP in the presence of a proton or sodium gradient. F-type ATPases consist of two structural domains, F(1) containing the extramembraneous catalytic core and F(0) containing the membrane proton channel, linked together by a central stalk and a peripheral stalk. During catalysis, ATP synthesis in the catalytic domain of F(1) is coupled via a rotary mechanism of the central stalk subunits to proton translocation. In terms of biological role, this protein is part of the stalk that links CF(0) to CF(1). It either transmits conformational changes from CF(0) to CF(1) or is implicated in proton conduction. In Prochlorococcus marinus (strain NATL1A), this protein is ATP synthase subunit delta.